A 298-amino-acid polypeptide reads, in one-letter code: Homoserine kinase (298 aa).

ATP is bound at residue 83–93 (PISRGLGSSSS).

The protein belongs to the GHMP kinase family. Homoserine kinase subfamily.

It is found in the cytoplasm. It carries out the reaction L-homoserine + ATP = O-phospho-L-homoserine + ADP + H(+). It functions in the pathway amino-acid biosynthesis; L-threonine biosynthesis; L-threonine from L-aspartate: step 4/5. Catalyzes the ATP-dependent phosphorylation of L-homoserine to L-homoserine phosphate. In Clostridium botulinum (strain Alaska E43 / Type E3), this protein is Homoserine kinase.